Consider the following 354-residue polypeptide: Uroporphyrinogen decarboxylase (354 aa).

Residues 35–39 (RQAGR), Asp84, Tyr159, Ser214, and His333 each bind substrate.

Belongs to the uroporphyrinogen decarboxylase family. In terms of assembly, homodimer.

The protein localises to the cytoplasm. The catalysed reaction is uroporphyrinogen III + 4 H(+) = coproporphyrinogen III + 4 CO2. The protein operates within porphyrin-containing compound metabolism; protoporphyrin-IX biosynthesis; coproporphyrinogen-III from 5-aminolevulinate: step 4/4. Functionally, catalyzes the decarboxylation of four acetate groups of uroporphyrinogen-III to yield coproporphyrinogen-III. This is Uroporphyrinogen decarboxylase from Nocardia farcinica (strain IFM 10152).